The primary structure comprises 1273 residues: Protein sax-3 (1273 aa).

Residues 1–23 (MFNRKTLLCTILLVLQAVIRSFC) form the signal peptide. Ig-like C2-type domains follow at residues 31 to 127 (PVII…GSLK), 133 to 222 (EDFR…ARLS), 227 to 312 (PKFE…AHLR), 317 to 411 (PSFQ…LKVT), and 425 to 511 (PTIE…ASLT). Intrachain disulfides connect Cys-52/Cys-110, Cys-154/Cys-205, Cys-248/Cys-296, Cys-338/Cys-393, and Cys-446/Cys-495. Fibronectin type-III domains are found at residues 533–628 (SPTQ…TSKP), 653–750 (QLIK…TAEA), and 755–849 (PPED…MNQD). Residues 874 to 894 (VPVIVIVAILIIFVVIIIAYC) form a helical membrane-spanning segment. The segment at 1033–1273 (APAMPTNPVP…NNGIVTQEQT (241 aa)) is disordered. Residues 1037–1046 (PTNPVPPEPP) show a composition bias toward pro residues. The span at 1096–1105 (QLHSSDGTGS) shows a compositional bias: polar residues. Over residues 1106-1115 (SKERTGERRT) the composition is skewed to basic and acidic residues. A compositionally biased stretch (pro residues) spans 1125–1136 (IPPPPSNPPPPG). Polar residues predominate over residues 1145–1156 (QTATRRQLNRGS). Residues 1207–1222 (MDDDGGSSEADGENSE) are compositionally biased toward acidic residues. Over residues 1240–1273 (SASTLAHSCYGTNGTAQRFRSIPRNNGIVTQEQT) the composition is skewed to polar residues.

Belongs to the immunoglobulin superfamily. ROBO/SAX3 family. In terms of tissue distribution, expressed in the AVG interneuron and the male-specific sensory neuron HOA.

It is found in the membrane. Its function is as follows. Required to confine migrating sex myoblasts to the ventral muscle quadrants during their migration through the body and for multiple aspects of sensory, motor, and interneuron axon guidance. In Caenorhabditis elegans, this protein is Protein sax-3.